Reading from the N-terminus, the 579-residue chain is Mitochondrial distribution and morphology protein 36 (579 aa).

The tract at residues 1 to 27 is disordered; the sequence is MDENGTVKPGYELKGLNSGNSRSNMDK. A Phosphoserine modification is found at Ser42. Disordered regions lie at residues 378 to 401 and 446 to 518; these read TPIN…GRRL and DNKH…ESQS. The segment covering 379 to 390 has biased composition (polar residues); sequence PINSSDSDNLSN. The span at 446–463 shows a compositional bias: basic and acidic residues; sequence DNKHSTKDTDSNIRRNEH. Residues 495–518 show a composition bias toward low complexity; the sequence is PSQSSSRMSTLPLSPSSSLLESQS.

Involved in mitochondrial distribution and morphology. In Saccharomyces cerevisiae (strain ATCC 204508 / S288c) (Baker's yeast), this protein is Mitochondrial distribution and morphology protein 36 (MDM36).